The primary structure comprises 332 residues: Cinnamoyl-CoA reductase 2 (332 aa).

NADP(+) is bound by residues 12–18 (GAGGYIA), R37, K43, 63–64 (DL), 83–85 (TAS), Y156, K160, 183–186 (PVLV), and S198. The cysteines at positions 149 and 157 are disulfide-linked. The active-site Proton donor is K160.

It belongs to the NAD(P)-dependent epimerase/dehydratase family. Dihydroflavonol-4-reductase subfamily. In terms of tissue distribution, expressed at low levels in leaves, stems and flowers.

It catalyses the reaction (E)-cinnamaldehyde + NADP(+) + CoA = (E)-cinnamoyl-CoA + NADPH + H(+). The protein operates within aromatic compound metabolism; phenylpropanoid biosynthesis. In terms of biological role, cinnamoyl-CoA reductase probably involved in the formation of phenolic compounds associated with the hypersensitive response. Seems not to be involved in lignin biosynthesis. The sequence is that of Cinnamoyl-CoA reductase 2 (CCR2) from Arabidopsis thaliana (Mouse-ear cress).